We begin with the raw amino-acid sequence, 65 residues long: Hirudin-3B' (65 aa).

Positions 1–3 (VVY) are interaction with thrombin active site. Intrachain disulfides connect Cys6/Cys14, Cys16/Cys28, and Cys22/Cys39. The interval 40–65 (VTGEGTPKPQSHNDGDFEEIPEEYLQ) is disordered. An O-linked (GalNAc...) threonine glycan is attached at Thr45. Residues 55–65 (DFEEIPEEYLQ) are interaction with fibrinogen-binding exosite of thrombin. Positions 55–65 (DFEEIPEEYLQ) are enriched in acidic residues. Tyr63 carries the post-translational modification Sulfotyrosine.

Belongs to the protease inhibitor I14 (hirudin) family.

Its subcellular location is the secreted. Its function is as follows. Hirudin is a potent thrombin-specific protease inhibitor. It forms a stable non-covalent complex with alpha-thrombin, thereby abolishing its ability to cleave fibrinogen. This Hirudo medicinalis (Medicinal leech) protein is Hirudin-3B'.